We begin with the raw amino-acid sequence, 1314 residues long: E3 ubiquitin-protein ligase RNF123 (1314 aa).

Alanine 2 carries the N-acetylalanine modification. Residues 74-254 (VDSEDNESQG…VAFNFGSRPL (181 aa)) enclose the B30.2/SPRY domain. The disordered stretch occupies residues 460–483 (HRSSRESRDGKEAREETTEERQRR). The segment covering 462-483 (SSRESRDGKEAREETTEERQRR) has biased composition (basic and acidic residues). At serine 675 the chain carries Phosphoserine. Arginine 683 bears the Asymmetric dimethylarginine mark. Positions 968-974 (WILVRLW) are interaction with NFKB1. Residues cysteine 1254, cysteine 1257, cysteine 1269, histidine 1271, cysteine 1274, cysteine 1277, cysteine 1288, and cysteine 1291 each contribute to the Zn(2+) site. The RING-type zinc finger occupies 1254–1292 (CPICYAHPISAVFQPCGHKSCKACINQHLMNNKDCFFCK).

Component of the KPC complex composed of RNF123/KPC1 and UBAC1/KPC2. Interacts with UBAC1 and CDKN1B via its N-terminal domain. Interacts with RIGI (via N-terminus) and IFIH1 (via N-terminus). Ubiquitinated, leading to its degradation. Deubiquitinated by USP19, thereby stimulating CDKN1B ubiquitin-dependent degradation.

It localises to the cytoplasm. It catalyses the reaction S-ubiquitinyl-[E2 ubiquitin-conjugating enzyme]-L-cysteine + [acceptor protein]-L-lysine = [E2 ubiquitin-conjugating enzyme]-L-cysteine + N(6)-ubiquitinyl-[acceptor protein]-L-lysine.. It functions in the pathway protein modification; protein ubiquitination. Its function is as follows. Catalytic subunit of the KPC complex that acts as E3 ubiquitin-protein ligase. Promotes the ubiquitination and proteasome-mediated degradation of CDKN1B which is the cyclin-dependent kinase inhibitor at the G0-G1 transition of the cell cycle. Also acts as a key regulator of the NF-kappa-B signaling by promoting maturation of the NFKB1 component of NF-kappa-B: acts by catalyzing ubiquitination of the NFKB1 p105 precursor, leading to limited proteasomal degradation of NFKB1 p105 and generation of the active NFKB1 p50 subunit. Functions also as an inhibitor of innate antiviral signaling mediated by RIGI and IFIH1 independently of its E3 ligase activity. Interacts with the N-terminal CARD domains of RIGI and IFIH1 and competes with the downstream adapter MAVS. In Mus musculus (Mouse), this protein is E3 ubiquitin-protein ligase RNF123 (Rnf123).